A 316-amino-acid chain; its full sequence is MSIKEQSLMTPYLQFDRSQWAALRDSVPMTLTEDEIAQLKGINEDLSLEEVAEIYLPLSRLLNFYISSNLRRQAVLEQFLGTNGQRIPYIISIAGSVAVGKSTTARVLQALLSRWPEHRRVELITTDGFLHPNQVLKERGLMKKKGFPESYDMHRLVKFVSDLKSGVPNVTAPVYSHLIYDVIPEGDKTVAQPDILILEGLNVLQSGMDYPHDPHHVFVSDFVDFSIYVDAPEELLQTWYINRFLKFREGAFTDPDSYFHNYAKLSKEEAVNTAASLWKEINWLNLKQNILPTRERASLIMTKSANHAVEQVRLRK.

Position 95–102 (95–102 (GSVAVGKS)) interacts with ATP.

It belongs to the prokaryotic pantothenate kinase family.

It localises to the cytoplasm. It carries out the reaction (R)-pantothenate + ATP = (R)-4'-phosphopantothenate + ADP + H(+). It functions in the pathway cofactor biosynthesis; coenzyme A biosynthesis; CoA from (R)-pantothenate: step 1/5. This Salmonella agona (strain SL483) protein is Pantothenate kinase.